We begin with the raw amino-acid sequence, 639 residues long: 3D-(3,5/4)-trihydroxycyclohexane-1,2-dione hydrolase (639 aa).

Glu-62 contributes to the thiamine diphosphate binding site. The interval 438-518 (SLPGDLQRMW…INILLFDNCG (81 aa)) is thiamine pyrophosphate binding. Mg(2+) is bound by residues Asp-489 and Asn-516.

This sequence belongs to the TPP enzyme family. Mg(2+) serves as cofactor. The cofactor is thiamine diphosphate.

The catalysed reaction is 3D-3,5/4-trihydroxycyclohexane-1,2-dione + H2O = 5-deoxy-D-glucuronate + H(+). It participates in polyol metabolism; myo-inositol degradation into acetyl-CoA; acetyl-CoA from myo-inositol: step 3/7. Its function is as follows. Involved in the cleavage of the C1-C2 bond of 3D-(3,5/4)-trihydroxycyclohexane-1,2-dione (THcHDO) to yield 5-deoxy-glucuronate (5DG). The chain is 3D-(3,5/4)-trihydroxycyclohexane-1,2-dione hydrolase from Clostridium perfringens (strain 13 / Type A).